The chain runs to 70 residues: MSFSVSCKTPKTTKLLVSSISESAVALIIITIRILFSIGKSDFKKIISKEINGAETIYYRNIPESKPQGS.

The chain crosses the membrane as a helical span at residues 15–37 (LLVSSISESAVALIIITIRILFS).

Its subcellular location is the membrane. This is an uncharacterized protein from Saccharomyces cerevisiae (strain ATCC 204508 / S288c) (Baker's yeast).